We begin with the raw amino-acid sequence, 266 residues long: Gas vesicle protein L (266 aa).

This sequence belongs to the gas vesicle GvpF/GvpL family.

It localises to the gas vesicle. Might be involved in nucleating gas vesicle formation. A minor component of the gas vesicle. Gas vesicles are hollow, gas filled proteinaceous nanostructures found in some microorganisms. It is not clear what function gas vesicles perform in soil bacteria. This Streptomyces sp. (strain CB03234) protein is Gas vesicle protein L.